The primary structure comprises 161 residues: Regulator of ribonuclease activity A (161 aa).

The protein belongs to the RraA family. In terms of assembly, homotrimer. Binds to both RNA-binding sites in the C-terminal region of Rne and to RhlB.

The protein resides in the cytoplasm. Globally modulates RNA abundance by binding to RNase E (Rne) and regulating its endonucleolytic activity. Can modulate Rne action in a substrate-dependent manner by altering the composition of the degradosome. Modulates RNA-binding and helicase activities of the degradosome. In Pseudoalteromonas atlantica (strain T6c / ATCC BAA-1087), this protein is Regulator of ribonuclease activity A.